The primary structure comprises 180 residues: Putative pre-16S rRNA nuclease (180 aa).

The span at 1–12 (MDAQERSERPDP) shows a compositional bias: basic and acidic residues. The disordered stretch occupies residues 1–23 (MDAQERSERPDPATDPGRGRRLG).

It belongs to the YqgF nuclease family.

It is found in the cytoplasm. Functionally, could be a nuclease involved in processing of the 5'-end of pre-16S rRNA. In Nocardia farcinica (strain IFM 10152), this protein is Putative pre-16S rRNA nuclease.